We begin with the raw amino-acid sequence, 161 residues long: Cyclic pyranopterin monophosphate synthase (161 aa).

Substrate contacts are provided by residues 73 to 75 (LCH) and 110 to 111 (ME). Asp-125 is an active-site residue.

The protein belongs to the MoaC family. Homohexamer; trimer of dimers.

The enzyme catalyses (8S)-3',8-cyclo-7,8-dihydroguanosine 5'-triphosphate = cyclic pyranopterin phosphate + diphosphate. Its pathway is cofactor biosynthesis; molybdopterin biosynthesis. In terms of biological role, catalyzes the conversion of (8S)-3',8-cyclo-7,8-dihydroguanosine 5'-triphosphate to cyclic pyranopterin monophosphate (cPMP). The sequence is that of Cyclic pyranopterin monophosphate synthase from Pseudomonas savastanoi pv. phaseolicola (strain 1448A / Race 6) (Pseudomonas syringae pv. phaseolicola (strain 1448A / Race 6)).